The following is a 70-amino-acid chain: MTDETFADRIDALEMRATYQEEAIETLNQVVTTQWKQIDALMRQIAEIGERLREAEAARPAPANEPPPHY.

It belongs to the SlyX family.

The protein is Protein SlyX homolog of Nitrobacter winogradskyi (strain ATCC 25391 / DSM 10237 / CIP 104748 / NCIMB 11846 / Nb-255).